Here is a 306-residue protein sequence, read N- to C-terminus: MIFQRTVQKMVQTTGVGLHSGNKVTLRIMPAPVNSGIVLTRTDLSPAVSIPAKAELVRETTMCTALVNDAGIRISTIEHLFAALAGLGIDNAVIEVDAPEIPIMDGSASPFVFLLQSAGIKEQAAAKKYIKINKTIRVEDGDKWAELKPFKGFRVNFKIDFNHPEIARSQQHMVMDFSTSAFVKDISRARTFGFMRDIEYLRANNLALGGSMENAVVLDEYRVLNPDGLRYEDEFVKHKILDAFGDLYVAGHAIVGEFCAFKTGHALNNQLVRALLVQQDAWELVSFDKEADVPVSFMVPGTQAFA.

Zn(2+) is bound by residues His79, His238, and Asp242. The active-site Proton donor is His265.

Belongs to the LpxC family. Requires Zn(2+) as cofactor.

The catalysed reaction is a UDP-3-O-[(3R)-3-hydroxyacyl]-N-acetyl-alpha-D-glucosamine + H2O = a UDP-3-O-[(3R)-3-hydroxyacyl]-alpha-D-glucosamine + acetate. The protein operates within glycolipid biosynthesis; lipid IV(A) biosynthesis; lipid IV(A) from (3R)-3-hydroxytetradecanoyl-[acyl-carrier-protein] and UDP-N-acetyl-alpha-D-glucosamine: step 2/6. Catalyzes the hydrolysis of UDP-3-O-myristoyl-N-acetylglucosamine to form UDP-3-O-myristoylglucosamine and acetate, the committed step in lipid A biosynthesis. The polypeptide is UDP-3-O-acyl-N-acetylglucosamine deacetylase (Shewanella denitrificans (strain OS217 / ATCC BAA-1090 / DSM 15013)).